The chain runs to 273 residues: Putative phosphoenolpyruvate synthase regulatory protein (273 aa).

Position 153–160 (153–160) interacts with ADP; sequence GVSRCGKT.

The protein belongs to the pyruvate, phosphate/water dikinase regulatory protein family. PSRP subfamily.

It catalyses the reaction [pyruvate, water dikinase] + ADP = [pyruvate, water dikinase]-phosphate + AMP + H(+). The enzyme catalyses [pyruvate, water dikinase]-phosphate + phosphate + H(+) = [pyruvate, water dikinase] + diphosphate. Functionally, bifunctional serine/threonine kinase and phosphorylase involved in the regulation of the phosphoenolpyruvate synthase (PEPS) by catalyzing its phosphorylation/dephosphorylation. The protein is Putative phosphoenolpyruvate synthase regulatory protein of Pectobacterium atrosepticum (strain SCRI 1043 / ATCC BAA-672) (Erwinia carotovora subsp. atroseptica).